A 555-amino-acid chain; its full sequence is Dihydroxy-acid dehydratase (555 aa).

Asp-78 lines the Mg(2+) pocket. [2Fe-2S] cluster is bound at residue Cys-119. Mg(2+)-binding residues include Asp-120 and Lys-121. Lys-121 carries the post-translational modification N6-carboxylysine. Residue Cys-195 coordinates [2Fe-2S] cluster. Mg(2+) is bound at residue Glu-444. Residue Ser-470 is the Proton acceptor of the active site.

This sequence belongs to the IlvD/Edd family. In terms of assembly, homodimer. The cofactor is [2Fe-2S] cluster. Mg(2+) is required as a cofactor.

The enzyme catalyses (2R)-2,3-dihydroxy-3-methylbutanoate = 3-methyl-2-oxobutanoate + H2O. It carries out the reaction (2R,3R)-2,3-dihydroxy-3-methylpentanoate = (S)-3-methyl-2-oxopentanoate + H2O. It participates in amino-acid biosynthesis; L-isoleucine biosynthesis; L-isoleucine from 2-oxobutanoate: step 3/4. The protein operates within amino-acid biosynthesis; L-valine biosynthesis; L-valine from pyruvate: step 3/4. Its function is as follows. Functions in the biosynthesis of branched-chain amino acids. Catalyzes the dehydration of (2R,3R)-2,3-dihydroxy-3-methylpentanoate (2,3-dihydroxy-3-methylvalerate) into 2-oxo-3-methylpentanoate (2-oxo-3-methylvalerate) and of (2R)-2,3-dihydroxy-3-methylbutanoate (2,3-dihydroxyisovalerate) into 2-oxo-3-methylbutanoate (2-oxoisovalerate), the penultimate precursor to L-isoleucine and L-valine, respectively. This Dehalococcoides mccartyi (strain CBDB1) protein is Dihydroxy-acid dehydratase.